A 91-amino-acid polypeptide reads, in one-letter code: Large ribosomal subunit protein uL22 (91 aa).

Belongs to the universal ribosomal protein uL22 family. Part of the 50S ribosomal subunit.

Functionally, this protein binds specifically to 23S rRNA; its binding is stimulated by other ribosomal proteins, e.g. L4, L17, and L20. It is important during the early stages of 50S assembly. It makes multiple contacts with different domains of the 23S rRNA in the assembled 50S subunit and ribosome. The globular domain of the protein is located near the polypeptide exit tunnel on the outside of the subunit, while an extended beta-hairpin is found that lines the wall of the exit tunnel in the center of the 70S ribosome. This chain is Large ribosomal subunit protein uL22 (rplV), found in Ash yellows phytoplasma.